Consider the following 100-residue polypeptide: NADH-quinone oxidoreductase subunit K 1 (100 aa).

The next 3 membrane-spanning stretches (helical) occupy residues 4-24, 29-49, and 60-80; these read LNNY…GVLV, IVIF…FIAF, and IFVF…LALM.

The protein belongs to the complex I subunit 4L family. NDH-1 is composed of 14 different subunits. Subunits NuoA, H, J, K, L, M, N constitute the membrane sector of the complex.

It is found in the cell inner membrane. It catalyses the reaction a quinone + NADH + 5 H(+)(in) = a quinol + NAD(+) + 4 H(+)(out). Functionally, NDH-1 shuttles electrons from NADH, via FMN and iron-sulfur (Fe-S) centers, to quinones in the respiratory chain. The immediate electron acceptor for the enzyme in this species is believed to be ubiquinone. Couples the redox reaction to proton translocation (for every two electrons transferred, four hydrogen ions are translocated across the cytoplasmic membrane), and thus conserves the redox energy in a proton gradient. This is NADH-quinone oxidoreductase subunit K 1 from Geotalea daltonii (strain DSM 22248 / JCM 15807 / FRC-32) (Geobacter daltonii).